The sequence spans 344 residues: Dihydroorotase (344 aa).

Residues histidine 14 and histidine 16 each coordinate Zn(2+). Residues 16 to 18 (HLR) and asparagine 42 each bind substrate. Zn(2+)-binding residues include lysine 100, histidine 137, and histidine 175. Lysine 100 carries the N6-carboxylysine modification. Histidine 137 is a binding site for substrate. Leucine 220 provides a ligand contact to substrate. Aspartate 248 serves as a coordination point for Zn(2+). Residue aspartate 248 is part of the active site. Substrate is bound by residues histidine 252 and alanine 264.

It belongs to the metallo-dependent hydrolases superfamily. DHOase family. Class II DHOase subfamily. In terms of assembly, homodimer. Zn(2+) serves as cofactor.

It catalyses the reaction (S)-dihydroorotate + H2O = N-carbamoyl-L-aspartate + H(+). The protein operates within pyrimidine metabolism; UMP biosynthesis via de novo pathway; (S)-dihydroorotate from bicarbonate: step 3/3. Catalyzes the reversible cyclization of carbamoyl aspartate to dihydroorotate. This is Dihydroorotase from Cupriavidus necator (strain ATCC 17699 / DSM 428 / KCTC 22496 / NCIMB 10442 / H16 / Stanier 337) (Ralstonia eutropha).